Here is a 167-residue protein sequence, read N- to C-terminus: MKIRIGFGYDVHPLVMNYNLWLGGIKIPYEKGLKGHSDADVLIHALCDALLGAADIGNIGTNFPNTNKKLRNIDSKILLKQTMSFIYSKNYELNNADITVCIEQPKLNPFIPQMKTCLAEIMQTDKGNISIKATTSEKMGFIGREEGIAVFATVLITPINEIGISCQ.

2 residues coordinate a divalent metal cation: D10 and H12. 4-CDP-2-C-methyl-D-erythritol 2-phosphate contacts are provided by residues 10 to 12 (DVH) and 36 to 37 (HS). H44 contributes to the a divalent metal cation binding site. 4-CDP-2-C-methyl-D-erythritol 2-phosphate-binding positions include 58–60 (NIG), 63–67 (FPNTN), 134–137 (TTSE), F141, and R144.

It belongs to the IspF family. In terms of assembly, homotrimer. The cofactor is a divalent metal cation.

The catalysed reaction is 4-CDP-2-C-methyl-D-erythritol 2-phosphate = 2-C-methyl-D-erythritol 2,4-cyclic diphosphate + CMP. Its pathway is isoprenoid biosynthesis; isopentenyl diphosphate biosynthesis via DXP pathway; isopentenyl diphosphate from 1-deoxy-D-xylulose 5-phosphate: step 4/6. Its function is as follows. Involved in the biosynthesis of isopentenyl diphosphate (IPP) and dimethylallyl diphosphate (DMAPP), two major building blocks of isoprenoid compounds. Catalyzes the conversion of 4-diphosphocytidyl-2-C-methyl-D-erythritol 2-phosphate (CDP-ME2P) to 2-C-methyl-D-erythritol 2,4-cyclodiphosphate (ME-CPP) with a corresponding release of cytidine 5-monophosphate (CMP). The protein is 2-C-methyl-D-erythritol 2,4-cyclodiphosphate synthase of Azobacteroides pseudotrichonymphae genomovar. CFP2.